Consider the following 959-residue polypeptide: Isoleucine--tRNA ligase (959 aa).

Residues Pro60 to His70 carry the 'HIGH' region motif. Glu569 contacts L-isoleucyl-5'-AMP. Positions Lys610–Ser614 match the 'KMSKS' region motif. ATP is bound at residue Lys613. Zn(2+)-binding residues include Cys928, Cys931, Cys948, and Cys951.

This sequence belongs to the class-I aminoacyl-tRNA synthetase family. IleS type 1 subfamily. In terms of assembly, monomer. Zn(2+) serves as cofactor.

Its subcellular location is the cytoplasm. It carries out the reaction tRNA(Ile) + L-isoleucine + ATP = L-isoleucyl-tRNA(Ile) + AMP + diphosphate. Functionally, catalyzes the attachment of isoleucine to tRNA(Ile). As IleRS can inadvertently accommodate and process structurally similar amino acids such as valine, to avoid such errors it has two additional distinct tRNA(Ile)-dependent editing activities. One activity is designated as 'pretransfer' editing and involves the hydrolysis of activated Val-AMP. The other activity is designated 'posttransfer' editing and involves deacylation of mischarged Val-tRNA(Ile). The polypeptide is Isoleucine--tRNA ligase (Rippkaea orientalis (strain PCC 8801 / RF-1) (Cyanothece sp. (strain PCC 8801))).